The sequence spans 488 residues: MELFTIFSIVVSSLILFTFWSLKVPKNLPPGPPKLPIIGNIHLLDKIAPHRNLRNLARKYGPIMHLRLGQVSTVVISSPRLAHEIMKTQDLSFADRPTTTTSQIFFYKASNIAWARYGNYWRQMKKICTLELLSAKKSRSFFYIREEELTRTYKFLDFSSGTPITLRDTIQEMVNNVVSRATLGDVSEDRQFIIDSTYTMLKSFNSFNLFNYYPSLSFINVISGKQAQWLKMHKEVDVILEKILREHRSRPRGKNDHEDLVDVLIRIKETGDLDMAITDDNIKAIILEMLTAGTSSSSMTIEWAFTEMMRNPKIMKKAQTEVRSVVKGDRVTEADIQNLDYTKLVIKETLRLHGVPILVPRENQEDCVVNGYDIPAKTRLLVNAWACATDPDSWEDPDSFIPERFENNSIGYSGADFEFIPFGAGRRICPGMNFGMGTVEYVVANLLLHYDWKLPDGMKPHDIDMREITGISTLPIHPLKIVPISLSK.

The chain crosses the membrane as a helical; Signal-anchor for type II membrane protein span at residues 2–22 (ELFTIFSIVVSSLILFTFWSL). The N-linked (GlcNAc...) asparagine glycan is linked to asparagine 407. Cysteine 429 provides a ligand contact to heme.

This sequence belongs to the cytochrome P450 family. Requires heme as cofactor. In terms of tissue distribution, expressed in leaf primordia.

The protein resides in the membrane. The enzyme catalyses germacra-1(10),4,11(13)-trien-12-oate + reduced [NADPH--hemoprotein reductase] + O2 = 8beta-hydroxygermacra-1(10),4,11(13)-trien-12-oate + oxidized [NADPH--hemoprotein reductase] + H2O + H(+). It participates in secondary metabolite biosynthesis; terpenoid biosynthesis. Functionally, involved in the biosynthesis of germacrene-derived sesquiterpene lactones. Hydroxylates germacrene A acid to 8-beta-hydroxy-germacrene A acid. Unlike 6-alpha-hydroxy-germacrene A acid, this compound cannot undergo spontaneous lactonization. This is Germacrene A acid 8-beta-hydroxylase from Helianthus annuus (Common sunflower).